A 316-amino-acid chain; its full sequence is Ribosomal RNA small subunit methyltransferase H (316 aa).

S-adenosyl-L-methionine is bound by residues 35–37 (AGH), aspartate 55, phenylalanine 84, aspartate 105, and glutamine 112.

The protein belongs to the methyltransferase superfamily. RsmH family.

It is found in the cytoplasm. It catalyses the reaction cytidine(1402) in 16S rRNA + S-adenosyl-L-methionine = N(4)-methylcytidine(1402) in 16S rRNA + S-adenosyl-L-homocysteine + H(+). Functionally, specifically methylates the N4 position of cytidine in position 1402 (C1402) of 16S rRNA. The chain is Ribosomal RNA small subunit methyltransferase H from Streptococcus pneumoniae (strain P1031).